The following is a 386-amino-acid chain: L-lactate dehydrogenase (386 aa).

Positions methionine 1–arginine 380 constitute an FMN hydroxy acid dehydrogenase domain. Substrate is bound at residue tyrosine 24. Positions 106 and 127 each coordinate FMN. Tyrosine 129 provides a ligand contact to substrate. Residue threonine 155 participates in FMN binding. Arginine 164 is a binding site for substrate. Lysine 251 lines the FMN pocket. Histidine 275 (proton acceptor) is an active-site residue. Residue arginine 278 participates in substrate binding. Aspartate 306–arginine 330 is an FMN binding site.

This sequence belongs to the FMN-dependent alpha-hydroxy acid dehydrogenase family. FMN is required as a cofactor.

It localises to the cell inner membrane. It carries out the reaction (S)-lactate + A = pyruvate + AH2. In terms of biological role, catalyzes the conversion of L-lactate to pyruvate. Is coupled to the respiratory chain. This Xanthomonas campestris pv. campestris (strain B100) protein is L-lactate dehydrogenase.